A 735-amino-acid polypeptide reads, in one-letter code: Transcription initiation factor IIF subunit alpha (735 aa).

6 disordered regions span residues M1–E68, E165–L263, N297–G323, K446–V465, E471–P606, and P631–P674. Positions R33–S54 are enriched in low complexity. Composition is skewed to basic and acidic residues over residues V59–E68 and E165–R174. Residues S175–I219 are compositionally biased toward polar residues. At S198 the chain carries Phosphoserine. A Phosphothreonine modification is found at T200. Positions P220–V238 are enriched in low complexity. Over residues E239–L263 the composition is skewed to polar residues. 2 stretches are compositionally biased toward acidic residues: residues A453–V465 and E471–P480. The span at Q487 to M500 shows a compositional bias: basic and acidic residues. Residues A513–L522 show a composition bias toward acidic residues. S515 carries the post-translational modification Phosphoserine. A compositionally biased stretch (basic and acidic residues) spans F523 to K536. A phosphoserine mark is found at S560, S562, and S571. The span at I564 to S583 shows a compositional bias: basic and acidic residues. Residues K584–K595 show a composition bias toward basic residues. The span at N636–P654 shows a compositional bias: polar residues. The residue at position 655 (S655) is a Phosphoserine.

The protein belongs to the TFIIF alpha subunit family. As to quaternary structure, TFIIF is composed of three different subunits: TFG1/RAP74, TFG2/RAP30 and TAF14. Phosphorylated on Ser and other residues by TAF1 and casein kinase II-like kinases.

The protein resides in the nucleus. In terms of biological role, TFIIF is a general transcription initiation factor that binds to RNA polymerase II. Its functions include the recruitment of RNA polymerase II to the promoter bound DNA-TBP-TFIIB complex, decreasing the affinity of RNA polymerase II for non-specific DNA, allowing for the subsequent recruitment of TFIIE and TFIIH, and facilitating RNA polymerase II elongation. The protein is Transcription initiation factor IIF subunit alpha (TFG1) of Saccharomyces cerevisiae (strain ATCC 204508 / S288c) (Baker's yeast).